Reading from the N-terminus, the 122-residue chain is Large ribosomal subunit protein uL14 (122 aa).

The protein belongs to the universal ribosomal protein uL14 family. Part of the 50S ribosomal subunit. Forms a cluster with proteins L3 and L19. In the 70S ribosome, L14 and L19 interact and together make contacts with the 16S rRNA in bridges B5 and B8.

Its function is as follows. Binds to 23S rRNA. Forms part of two intersubunit bridges in the 70S ribosome. In Cupriavidus metallidurans (strain ATCC 43123 / DSM 2839 / NBRC 102507 / CH34) (Ralstonia metallidurans), this protein is Large ribosomal subunit protein uL14.